Here is a 546-residue protein sequence, read N- to C-terminus: Chaperonin GroEL (546 aa).

ATP contacts are provided by residues 30–33, Lys-51, 87–91, Gly-415, and Asp-495; these read TLGP and DGTTT.

It belongs to the chaperonin (HSP60) family. In terms of assembly, forms a cylinder of 14 subunits composed of two heptameric rings stacked back-to-back. Interacts with the co-chaperonin GroES.

It is found in the cytoplasm. It catalyses the reaction ATP + H2O + a folded polypeptide = ADP + phosphate + an unfolded polypeptide.. Together with its co-chaperonin GroES, plays an essential role in assisting protein folding. The GroEL-GroES system forms a nano-cage that allows encapsulation of the non-native substrate proteins and provides a physical environment optimized to promote and accelerate protein folding. In Alteromonas mediterranea (strain DSM 17117 / CIP 110805 / LMG 28347 / Deep ecotype), this protein is Chaperonin GroEL.